Here is a 250-residue protein sequence, read N- to C-terminus: Uridylate kinase (250 aa).

Residue 17-20 (KLSG) coordinates ATP. Glycine 59 is a binding site for UMP. ATP is bound by residues glycine 60 and arginine 64. UMP-binding positions include aspartate 79 and 140–147 (TGNPYFTT). Threonine 167, tyrosine 173, and aspartate 176 together coordinate ATP.

Belongs to the UMP kinase family. As to quaternary structure, homohexamer.

The protein resides in the cytoplasm. It catalyses the reaction UMP + ATP = UDP + ADP. Its pathway is pyrimidine metabolism; CTP biosynthesis via de novo pathway; UDP from UMP (UMPK route): step 1/1. With respect to regulation, inhibited by UTP. Its function is as follows. Catalyzes the reversible phosphorylation of UMP to UDP. The sequence is that of Uridylate kinase from Myxococcus xanthus (strain DK1622).